Here is an 806-residue protein sequence, read N- to C-terminus: MADFLNFPRQMLPFSKKTKQWRKDCLLWANQKTFFNYSLVRKSVIHKKINYDLLNGRLHMSDLELVLNPDGIKAAYIPDRLQHYPIMNSKLNVLRGEESKRVFDFKVVVTNPNAISEIEDNKKNELLQRLQEMITDTSISEDEYNIKLEKLNDYYTYEWQDIREVRANELLNHYIKEYDIPLIFNNGFMDAMTCGEEIYQCDIVGGEPVIERVNPLKIRIFKSGYSNKVEDADMIILEDYWSPGRVIDTYYDVLSPKDIKYIETMPDYIGQGAVDQMDNIDERYGFVNQNMIGDEITVRDGTYFFDPANLFTEGIANSLLPYDLAGNLRVLRLYWKSKRKILKVKSYDPETGEEEWNFYPENYVVNKEAGEEVQSFWVNEAWEGTMIGNEIFVNMRPRLIQYNRLNNPSRCHFGIVGSIYNLNDSRPFSLVDMMKPYNYLYDAIHDRLNKAIASNWGSILELDLSKVPKGWDVGKWMYYARVNHIAVIDSFKEGTIGASTGKLAGALNNAGKGMIETNIGNYIQQQINLLEFIKMEMADVAGISKQREGQISQRETVGGVERATLQSSHITEWLFTIHDDVKKRALECFLETAKVALKGRNKKFQYILSDTSTRVMEIDGDEFAEADYGLVVDNSNGTQELQQKLDTLAQAALQTQTLSFSTITKLYTSSSLAEKQRLIEKDEKQIRERQAQAQKEQLEAQQQIAAMQQQQKEAELLQKEEANIRDNQTKIIIAQIQSEGGPDEEDGIMIDDYSPEAKANLAEKIREFDEKLKLDKDKLKLDKKKAETDASIKRQALRKKSSTTNK.

The interaction with Cargo protein 1 stretch occupies residues 337-380; the sequence is SKRKILKVKSYDPETGEEEWNFYPENYVVNKEAGEEVQSFWVNE. Residues 783–792 show a composition bias toward basic and acidic residues; the sequence is KKKAETDASI. A disordered region spans residues 783 to 806; it reads KKKAETDASIKRQALRKKSSTTNK. Basic residues predominate over residues 795 to 806; the sequence is QALRKKSSTTNK.

Homododecamer. Interacts with the Cargo protein 1. Interacts with the major capsid protein.

Its subcellular location is the virion. Its function is as follows. Forms the portal vertex of the capsid. Probably involved in head assembly, genome packaging, tail attachment, and genome ejection. The protein is Portal protein of Bacteroides phage crAss001 (Bacteroides phage PhiCrAss001).